Here is a 165-residue protein sequence, read N- to C-terminus: Phosphopantetheine adenylyltransferase (165 aa).

Belongs to the eukaryotic CoaD family.

It is found in the cytoplasm. It catalyses the reaction (R)-4'-phosphopantetheine + ATP + H(+) = 3'-dephospho-CoA + diphosphate. The protein operates within cofactor biosynthesis; coenzyme A biosynthesis. Its function is as follows. Reversibly transfers an adenylyl group from ATP to 4'-phosphopantetheine, yielding dephospho-CoA (dPCoA) and pyrophosphate. The polypeptide is Phosphopantetheine adenylyltransferase (Thermococcus kodakarensis (strain ATCC BAA-918 / JCM 12380 / KOD1) (Pyrococcus kodakaraensis (strain KOD1))).